The primary structure comprises 614 residues: ATP-dependent RNA helicase dbp-3 (614 aa).

The disordered stretch occupies residues 1–138 (MSSTKKHSRS…GTTTPAASTN (138 aa)). Residues 9 to 36 (RSEGEEKDARLAKKVKTDETPVDGEVKK) show a composition bias toward basic and acidic residues. Composition is skewed to basic residues over residues 37 to 58 (ERKK…KSKK) and 91 to 109 (KKEK…KKAK). Residues 117–138 (EESTSASKATTNGTTTPAASTN) are compositionally biased toward low complexity. The Q motif motif lies at 180 to 207 (MNFSQLPQSNLISKNPFAAYTNPTPIQS). A Helicase ATP-binding domain is found at 210 to 394 (WPFSLSGRDV…ESYMINPAQV (185 aa)). 223-230 (AETGSGKT) contributes to the ATP binding site. The DEAD box motif lies at 340–343 (DEAD). One can recognise a Helicase C-terminal domain in the interval 435–584 (RLYELLKEAQ…PVPEELLKFG (150 aa)).

It belongs to the DEAD box helicase family. DDX5/DBP2 subfamily.

It is found in the nucleus. The protein localises to the nucleolus. It carries out the reaction ATP + H2O = ADP + phosphate + H(+). In terms of biological role, ATP-dependent RNA helicase required for 60S ribosomal subunit synthesis. Involved in efficient pre-rRNA processing, predominantly at site A3, which is necessary for the normal formation of 25S and 5.8S rRNAs. In Neurospora crassa (strain ATCC 24698 / 74-OR23-1A / CBS 708.71 / DSM 1257 / FGSC 987), this protein is ATP-dependent RNA helicase dbp-3 (dbp-3).